Reading from the N-terminus, the 382-residue chain is MSTWLLPENIADVLPSEARKIEELRRRLLDRFRSYGYEMVMPPLLEYLESLLTSGGNELRLRTFKLVDQVSGRTLGLRADMTPQVARIDAHLLNRQGVTRLCYAGPVLHTRPRGLHASREQLQIGAEIYGHAGLEADQEIQQLMLDALHLTGLKKIRLDLCHAGVLAALFARDAAAAERGEALYEALAGKDVPRLNELTDDLGADTRAALRALPRLYGDASVLDDARRLLPALPEITRALDDLAHLAAQVKDAEVAIDLADLRGYAYHSGAMFAAYVDGVPNAVAHGGRYDHVGQAYGRARPATGFSLDLREIARISPVEARGAAILAPWKQDDALRAAVGALRDAGEVVIQALPGHDHVLDEFACDRALVERDGAWVIEPR.

This sequence belongs to the class-II aminoacyl-tRNA synthetase family. HisZ subfamily. Heteromultimer composed of HisG and HisZ subunits.

The protein localises to the cytoplasm. Its pathway is amino-acid biosynthesis; L-histidine biosynthesis; L-histidine from 5-phospho-alpha-D-ribose 1-diphosphate: step 1/9. Its function is as follows. Required for the first step of histidine biosynthesis. May allow the feedback regulation of ATP phosphoribosyltransferase activity by histidine. This chain is ATP phosphoribosyltransferase regulatory subunit, found in Burkholderia pseudomallei (strain 1106a).